Consider the following 49-residue polypeptide: Large ribosomal subunit protein bL33 (49 aa).

Belongs to the bacterial ribosomal protein bL33 family.

In Leuconostoc citreum (strain KM20), this protein is Large ribosomal subunit protein bL33.